We begin with the raw amino-acid sequence, 2178 residues long: MLITREQLMKIASIPLKRKEPEYNLILDALENFNRDIEGTSVKEIYSKLSKLNELVDNYQTKYPSSGRNLALENFRDSLYSELRELIKNSRTSTIASKNLSFIWIGGPISDQSLEYYNMWKMFNKDYNIRLFYDKNSLLVNTLKTAIIQESSKVIIEQNQSNILDGTYGHNKFYSDRMKLIYRYKRELKMLYENMKQNNSVDDIIINFLSNYFKYDIGKLNNQKENNNNKMIAIGATDINTENILTNKLKSYYYQELIQTNNLAAASDILRIAILKKYGGVYCDLDFLPGVNLSLFNDISKPNGMDSNYWEAAIFEAIANEKKLMNNYPYKYMEQVPSEIKERILSFVRNHDINDLILPLGDIKISQLEILLSRLKAATGKKTFSNAFIISNNDSLTLNNLISQLENRYEILNSIIQEKFKICETYDSYINSVSELVLETTPKNLSMDGSSFYQQIIGYLSSGFKPEVNSTVFFSGPNIYSSATCDTYHFIKNTFDMLSSQNQEIFEASNNLYFSKTHDEFKSSWLLRSNIAEKEFQKLIKTYIGRTLNYEDGLNFNKWKRVTTSELLKVIEEVNSTKIYENYDLNMILQIQGDDISYESAVNVFGKNPNKSILIQGVDDFANVFYFENGIVQSDNINNILSRFNDIKKIKLTLIGHGENVFNPKLFGGKTVNDLYTNIIKPKLQHLLEREGVILKNKYLKINILGCYMFTPKVDINSTFVGKLFNKISRDLQPKGFSKNQLEISANKYAIRINREGKREVLDYFGKWVSNTDLIAEQISNKYVVYWNEVENTLSARVEQLNKVAEFAKDINSIIQTTNNQELKQSLVNTYADLITTLYSELLKEDIPFELDNIQIKERIILNEISRLHDFSNIILDFYQKNNISNNMIILFDSIIKEKDYYNVKLANKITGETSVIKTYSDSLWNFTNKYKKIVDDIKGIIVKDINGEFIKKADFEIEQNPSLLNSAMLMQLLIDYKPYTEILTNMNTSLKVQAYAQIFQLSIGAIQEATEIVTIISDALNANFNILSKLKVGSSVASVIIDGINLIAALTELKNVKTNFERKLIEAKVGMYSIGFILESSSLISGLLGATAVSEILGVISVPVAGILVGLPSLVNNILVLGEKYNQILDYFSKFYPIVGKNPFSIQDNIIIPYDDIAITELNFKYNKFKYGYAKISGLKVGLVTHIGENIDHYFSAPSLDHYIELSIYPALKLNDTNLPKGNVVLLPSGLNKVYKPEISAIAGANSQEGNGVEVLNLIRNYYVDSNGNTKFPWKYEAPFEYSFSYMRVEYFDTKVNVILDNENKTLIIPVLTIDEMRNKISYEILGDGGQYNVILPVNQTNINIVSNKNDIWNFDVSYIVKESKIEDNKFVLDGFINNIFSTLKVSNDGFKIGKQFISIKNTPRAINLSFKINNNIVIVSIYLNHEKSNSITIISSDLNDIKNNFDNLLDNINYIGLGSISDNTINCIVRNDEVYMEGKIFLNEKKLVFIQNELELHLYDSVNKDSQYLINNPINNVVKYKDGYIVEGTFLINSTENKYSLYIENNKIMLKGLYLESSVFKTIQDKIYSKEKVNDYILSLIKKFFTVNIQLCPFMIVSGVDENNRYLEYMLSTNNKWIINGGYWENDFNNYKIVDFEKCNVIVSGSNKLNSEGDLADTIDVLDKDLENLYIDSVIIIPKVYTKKIIIHPIPNNPQINIINTQSIHDKCHLIIDSVLTNNYHWESDGDDLIITNGLDINIRILQGLSFGFKYKNIYLKFSNYDELSLNDFLLQNYNVKGLYYINGELHYKNIPGDTFEYGWINIDSRWYFFDSINLIAKKGYQEIEGERYYFNPNTGVQESGVFLTPNGLEYFTNKHASSKRWGRAINYTGWLTLDGNKYYFQSNSKAVTGLQKISDKYYYFNDNGQMQIKWQIINNNKYYFDGNTGEAIIGWFNNNKERYYFDSEGRLLTGYQVIGDKSYYFSDNINGNWEEGSGVLKSGIFKTPSGFKLFSSEGDKSAINYKGWLDLNGNKYYFNSDSIAVTGSYNIKGIQYYFNPKTAVLTNGWYTLDNNNYYVSNGHNVLGYQDIDGKGYYFDPSTGIQKAGVFPTPNGLRYFTMKPIDGQRWGQCIDYTGWLHLNGNKYYFGYYNSAVTGWRVLGGKRYFFNIKTGAATTGLLTLSGKRYYFNEKGEQLTLV.

The interval methionine 1 to serine 93 is four-helical bundle. Residues lysine 98 to phenylalanine 474 enclose the GT44 domain. Residues lysine 98–phenylalanine 474 are glucosyltransferase region. An N-acetylglucosaminyltransferase region region spans residues lysine 98–phenylalanine 474. Residues isoleucine 103–isoleucine 105, asparagine 141, serine 267–arginine 271, and aspartate 284–aspartate 286 contribute to the UDP-N-acetyl-alpha-D-glucosamine site. Mg(2+)-binding residues include aspartate 284, aspartate 286, and glutamate 520. Serine 523–tryptophan 525 serves as a coordination point for UDP-N-acetyl-alpha-D-glucosamine. Positions asparagine 549 to glutamate 806 are autoprocessing region. Residues asparagine 557, lysine 607, and lysine 651 each coordinate 1D-myo-inositol hexakisphosphate. The 214-residue stretch at valine 574–tryptophan 787 folds into the Peptidase C80 domain. Histidine 657 functions as the For protease activity in the catalytic mechanism. The active-site Nucleophile; for protease activity is cysteine 707. 1D-myo-inositol hexakisphosphate contacts are provided by residues lysine 758–arginine 759 and lysine 782. Positions phenylalanine 807–asparagine 1485 are translocation region. Cell wall-binding repeat units follow at residues glutamate 1799–isoleucine 1818, lysine 1820–valine 1839, tyrosine 1870–alanine 1889, valine 1890–methionine 1909, glutamine 1910–glutamate 1929, isoleucine 1931–leucine 1950, leucine 1951–glycine 1970, tyrosine 2004–alanine 2023, valine 2024–valine 2043, threonine 2045–asparagine 2060, valine 2064–isoleucine 2083, tyrosine 2114–alanine 2133, valine 2134–alanine 2153, and threonine 2155–glutamine 2174.

This sequence belongs to the clostridial glucosylating toxin (LCGT) family. Requires Mn(2+) as cofactor. The cofactor is Mg(2+). Post-translationally, undergoes autocatalytic cleavage to release the N-terminal part (N-acetylglucosaminyltransferase TcdA), which constitutes the active part of the toxin, in the host cytosol. 1D-myo-inositol hexakisphosphate-binding (InsP6) activates the peptidase C80 domain and promotes autoprocessing.

The protein resides in the secreted. It localises to the host endosome membrane. It is found in the host cytoplasm. The protein localises to the host cytosol. Its subcellular location is the host cell membrane. The catalysed reaction is L-threonyl-[protein] + UDP-N-acetyl-alpha-D-glucosamine = 3-O-(N-acetyl-alpha-D-glucosaminyl)-L-threonyl-[protein] + UDP + H(+). With respect to regulation, protease activity is activated upon binding to 1D-myo-inositol hexakisphosphate (InsP6), which induces conformational reorganization. Precursor of a cytotoxin, which enters into host cells and mediates autoprocessing to release the active toxin (N-acetylglucosaminyltransferase TcdA) into the host cytosol. Once entered into host cells, acidification in the endosome promotes the membrane insertion of the translocation region and formation of a pore, leading to translocation of the GT44 and peptidase C80 domains across the endosomal membrane. This activates the peptidase C80 domain and autocatalytic processing, releasing the N-terminal part (N-acetylglucosaminyltransferase TcdA), which constitutes the active part of the toxin, in the cytosol. In terms of biological role, active form of the toxin, which is released into the host cytosol following autoprocessing and inactivates small GTPases. Acts by mediating monoglycosylation of small GTPases of the Rho family (Rac1, RhoA, RhoG and Cdc42) in host cells at the conserved threonine residue located in the switch I region ('Thr-37/35'), using UDP-N-acetyl-alpha-D-glucosamine as the sugar donor. Monoglycosylation of host small GTPases completely prevents the recognition of the downstream effector, blocking the GTPases in their inactive form, leading to actin cytoskeleton disruption and cell death. This Clostridium novyi protein is Toxin A (tcdA).